Here is a 294-residue protein sequence, read N- to C-terminus: 1D-myo-inositol 2-acetamido-2-deoxy-alpha-D-glucopyranoside deacetylase (294 aa).

Zn(2+) contacts are provided by His15, Asp18, and His150.

It belongs to the MshB deacetylase family. Zn(2+) serves as cofactor.

It carries out the reaction 1D-myo-inositol 2-acetamido-2-deoxy-alpha-D-glucopyranoside + H2O = 1D-myo-inositol 2-amino-2-deoxy-alpha-D-glucopyranoside + acetate. Its function is as follows. Catalyzes the deacetylation of 1D-myo-inositol 2-acetamido-2-deoxy-alpha-D-glucopyranoside (GlcNAc-Ins) in the mycothiol biosynthesis pathway. In Streptomyces avermitilis (strain ATCC 31267 / DSM 46492 / JCM 5070 / NBRC 14893 / NCIMB 12804 / NRRL 8165 / MA-4680), this protein is 1D-myo-inositol 2-acetamido-2-deoxy-alpha-D-glucopyranoside deacetylase.